The following is a 973-amino-acid chain: Peptidyl-glycine alpha-amidating monooxygenase (973 aa).

Positions Met-1–Ala-20 are cleaved as a signal peptide. The tract at residues Met-1 to Gly-494 is peptidylglycine alpha-hydroxylating monooxygenase. A propeptide spanning residues Phe-21–Arg-30 is cleaved from the precursor. The Intragranular portion of the chain corresponds to Phe-31–Gly-863. 5 disulfides stabilise this stretch: Cys-42–Cys-181, Cys-76–Cys-121, Cys-109–Cys-126, Cys-222–Cys-329, and Cys-288–Cys-310. Residues His-102 and His-103 each contribute to the Cu(2+) site. Cu(2+) is bound by residues His-167, His-237, His-239, and Met-309. The peptidyl-alpha-hydroxyglycine alpha-amidating lyase stretch occupies residues Asp-495 to Val-817. NHL repeat units follow at residues Met-498–Asp-541, Ala-567–Asn-608, Leu-617–Ser-662, and Gly-670–Asp-714. A Ca(2+)-binding site is contributed by Val-517. Residue Arg-530 coordinates a protein. Residue His-582 coordinates Zn(2+). Residue Leu-584 coordinates Ca(2+). Cys-631 and Cys-652 are disulfide-bonded. Tyr-651 contacts a protein. A Zn(2+)-binding site is contributed by His-687. Residues Cys-699 and Cys-710 are joined by a disulfide bond. Arg-703 is a binding site for a protein. N-linked (GlcNAc...) asparagine glycosylation occurs at Asn-762. The stretch at Gly-766–Thr-809 is one NHL 5 repeat. Residue His-783 participates in Zn(2+) binding. Residue Asp-784 participates in Ca(2+) binding. Residues Val-864–Ile-887 form a helical membrane-spanning segment. A sulfotyrosine mark is found at Ile-875 and Arg-893. At Arg-888–Ser-973 the chain is on the cytoplasmic side. Residues Ser-918, Ser-929, and Ser-942 each carry the phosphoserine modification. The tract at residues Asn-925–Ser-942 is interaction with RASSF9. Positions Gly-937 to Ser-973 are disordered. Thr-943 carries the post-translational modification Phosphothreonine. Ser-946 carries the post-translational modification Phosphoserine; by UHMK1; in vitro. The span at Glu-949–Tyr-961 shows a compositional bias: acidic residues. Ser-957 carries the post-translational modification Phosphoserine. Positions Ser-962–Ser-973 are enriched in low complexity.

It in the C-terminal section; belongs to the peptidyl-alpha-hydroxyglycine alpha-amidating lyase family. In the N-terminal section; belongs to the copper type II ascorbate-dependent monooxygenase family. As to quaternary structure, monomer. Interacts with RASSF9. Zn(2+) serves as cofactor. The cofactor is Cu(2+).

The protein resides in the cytoplasmic vesicle. The protein localises to the secretory vesicle membrane. It is found in the membrane. It localises to the secreted. It catalyses the reaction a [peptide]-C-terminal glycine + 2 L-ascorbate + O2 = a [peptide]-C-terminal (2S)-2-hydroxyglycine + 2 monodehydro-L-ascorbate radical + H2O. The enzyme catalyses a [peptide]-C-terminal (2S)-2-hydroxyglycine = a [peptide]-C-terminal amide + glyoxylate. The catalysed reaction is N-dodecanoylglycine + 2 L-ascorbate + O2 = N-dodecanoyl-(2S)-hydroxyglycine + 2 monodehydro-L-ascorbate radical + H2O. It carries out the reaction N-dodecanoyl-(2S)-hydroxyglycine = dodecanamide + glyoxylate. It catalyses the reaction N-(9Z,12Z,15Z)-octadecatrienoylglycine + 2 L-ascorbate + O2 = N-(9Z,12Z,15Z)-octadecatrienoyl-(2S)-hydroxyglycine + 2 monodehydro-L-ascorbate radical + H2O. The enzyme catalyses N-(9Z,12Z,15Z)-octadecatrienoyl-(2S)-hydroxyglycine = (9Z,12Z,15Z)-octadecatrienamide + glyoxylate. The catalysed reaction is N-(9Z-octadecenoyl)glycine + 2 L-ascorbate + O2 = N-(9Z-octadecenoyl)-(2S)-hydroxyglycine + 2 monodehydro-L-ascorbate radical + H2O. It carries out the reaction N-(9Z-octadecenoyl)-(2S)-hydroxyglycine = (9Z)-octadecenamide + glyoxylate. It catalyses the reaction N-tetradecanoylglycine + 2 L-ascorbate + O2 = N-tetradecanoyl-(2S)-hydroxyglycine + 2 monodehydro-L-ascorbate radical + H2O. The enzyme catalyses N-tetradecanoyl-(2S)-hydroxyglycine = tetradecamide + glyoxylate. The catalysed reaction is N-decanoylglycine + 2 L-ascorbate + O2 = N-decanoyl-(2S)-hydroxyglycine + 2 monodehydro-L-ascorbate radical + H2O. It carries out the reaction N-decanoyl-(2S)-hydroxyglycine = decanamide + glyoxylate. It catalyses the reaction N-octanoylglycine + 2 L-ascorbate + O2 = N-octanoyl-(2S)-hydroxyglycine + 2 monodehydro-L-ascorbate radical + H2O. The enzyme catalyses N-octanoyl-(2S)-hydroxyglycine = octanamide + glyoxylate. PAM activity is inhibited by EDTA, phenylglyoxal and diethyl pyrocarbonate. PAL activity is stimulated by cadmium and inhibited by mercury. In terms of biological role, bifunctional enzyme that catalyzes amidation of the C-terminus of proteins. Alpha-amidation is present at the C-terminus of many endocrine hormones and neuropeptides and is required for their activity. C-terminal amidation also takes place in response to protein fragmentation triggered by oxidative stress, promoting degradation of amidated protein fragments by the proteasome. Alpha-amidation involves two sequential reactions, both of which are catalyzed by separate catalytic domains of the enzyme. The first step, catalyzed by peptidyl alpha-hydroxylating monooxygenase (PHM) domain, is the copper-, ascorbate-, and O2- dependent stereospecific hydroxylation (with S stereochemistry) at the alpha-carbon (C-alpha) of the C-terminal glycine of the peptidylglycine substrate. The second step, catalyzed by the peptidylglycine amidoglycolate lyase (PAL) domain, is the zinc-dependent cleavage of the N-C-alpha bond, producing the alpha-amidated peptide and glyoxylate. Similarly, catalyzes the two-step conversion of an N-fatty acylglycine to a primary fatty acid amide and glyoxylate. This chain is Peptidyl-glycine alpha-amidating monooxygenase, found in Homo sapiens (Human).